The primary structure comprises 755 residues: Polyribonucleotide nucleotidyltransferase (755 aa).

Mg(2+) is bound by residues Asp482 and Asp488. A KH domain is found at 549 to 608 (PRMVSFYIDKDKISAAIGAKGKNIRSVCERSNAKIEIGDDGKVSVFAMSSAEAEIAKNMM). Residues 618-686 (GAIVDVKVVK…KGGCPKLSRR (69 aa)) enclose the S1 motif domain. Over residues 702-714 (NEEKKDSSNDRDY) the composition is skewed to basic and acidic residues. Residues 702–755 (NEEKKDSSNDRDYYNSPFNRKSGHRKRPVHSRSSFSNRNNRPKFGNDDSSSSFY) form a disordered region. Positions 722–731 (KSGHRKRPVH) are enriched in basic residues.

It belongs to the polyribonucleotide nucleotidyltransferase family. Mg(2+) is required as a cofactor.

It is found in the cytoplasm. It carries out the reaction RNA(n+1) + phosphate = RNA(n) + a ribonucleoside 5'-diphosphate. In terms of biological role, involved in mRNA degradation. Catalyzes the phosphorolysis of single-stranded polyribonucleotides processively in the 3'- to 5'-direction. This chain is Polyribonucleotide nucleotidyltransferase, found in Wolbachia sp. subsp. Brugia malayi (strain TRS).